Consider the following 180-residue polypeptide: Non-specific lipid transfer protein GPI-anchored 3 (180 aa).

Residues methionine 1–alanine 22 form the signal peptide. Cystine bridges form between cysteine 41-cysteine 78, cysteine 48-cysteine 62, cysteine 63-cysteine 104, and cysteine 76-cysteine 113. Residues asparagine 91 and asparagine 120 are each glycosylated (N-linked (GlcNAc...) asparagine). Composition is skewed to low complexity over residues serine 116–proline 125 and proline 133–proline 156. The disordered stretch occupies residues serine 116 to proline 156. Serine 158 is lipidated: GPI-anchor amidated serine. Residues serine 159–phenylalanine 180 constitute a propeptide, removed in mature form.

This sequence belongs to the plant LTP family. Restricted to stamen, pollen and sporophytic tissues. Also detected, at low levels, in stems and leaves.

It localises to the cell membrane. Functionally, lipid transfer protein involved in seed and ovule maturation and development, probably by regulating the fatty acids homeostasis during suberin and sporopollenin biosynthesis or deposition. This chain is Non-specific lipid transfer protein GPI-anchored 3, found in Arabidopsis thaliana (Mouse-ear cress).